The chain runs to 229 residues: UPF0758 protein MM_2791 (229 aa).

Positions 106-228 constitute an MPN domain; sequence KISSPKDVYT…YVSLKDEGFV (123 aa). H177, H179, and D190 together coordinate Zn(2+). The short motif at 177 to 190 is the JAMM motif element; it reads HNHPSGDPSPSRED.

Belongs to the UPF0758 family.

This is UPF0758 protein MM_2791 from Methanosarcina mazei (strain ATCC BAA-159 / DSM 3647 / Goe1 / Go1 / JCM 11833 / OCM 88) (Methanosarcina frisia).